A 1166-amino-acid polypeptide reads, in one-letter code: Topoisomerase 1-associated factor 1 (1166 aa).

Disordered regions lie at residues 333-358, 564-594, 881-981, and 1023-1145; these read KMDE…NNDF, QVRS…ASDD, DPYT…RARL, and ALLT…DENA. A compositionally biased stretch (acidic residues) spans 585–594; sequence DNNEEHASDD. Over residues 881 to 893 the composition is skewed to basic and acidic residues; sequence DPYTGDIEHDPRQ. The span at 916–926 shows a compositional bias: acidic residues; that stretch reads FGSESEGEDVP. Residues 966–981 are compositionally biased toward basic and acidic residues; it reads LEARRKARQENTRARL. Positions 1087-1107 are enriched in acidic residues; that stretch reads TEDDENTSATSDEDDEFDFDD. The span at 1109–1142 shows a compositional bias: basic and acidic residues; that stretch reads LAFRRDRDLDRDPVLPSHAEDMQPTDTRELRDND.

The protein belongs to the timeless family.

The protein resides in the nucleus. In terms of biological role, involved in chromosome segregation during meiosis and DNA damage repair. The chain is Topoisomerase 1-associated factor 1 (tof1) from Aspergillus oryzae (strain ATCC 42149 / RIB 40) (Yellow koji mold).